The primary structure comprises 308 residues: HTH-type transcriptional activator AllS (308 aa).

One can recognise an HTH lysR-type domain in the interval 2–59; sequence FDPETLRTFIAVAETGSFSKAAERLCKTTATISYRIKLLEENTGVALFFRTTRSVTLT. Positions 19 to 38 form a DNA-binding region, H-T-H motif; the sequence is FSKAAERLCKTTATISYRIK.

This sequence belongs to the LysR transcriptional regulatory family.

In terms of biological role, positive regulator essential for the expression of allD operon. Binds to the allD promoter. The polypeptide is HTH-type transcriptional activator AllS (allS) (Escherichia coli O1:K1 / APEC).